The chain runs to 546 residues: Chaperonin GroEL (546 aa).

ATP is bound by residues 30-33 (TLGP), lysine 51, 87-91 (DGTTT), glycine 415, and aspartate 495.

Belongs to the chaperonin (HSP60) family. In terms of assembly, forms a cylinder of 14 subunits composed of two heptameric rings stacked back-to-back. Interacts with the co-chaperonin GroES.

It localises to the cytoplasm. It carries out the reaction ATP + H2O + a folded polypeptide = ADP + phosphate + an unfolded polypeptide.. Functionally, together with its co-chaperonin GroES, plays an essential role in assisting protein folding. The GroEL-GroES system forms a nano-cage that allows encapsulation of the non-native substrate proteins and provides a physical environment optimized to promote and accelerate protein folding. The chain is Chaperonin GroEL from Alteromonas mediterranea (strain DSM 17117 / CIP 110805 / LMG 28347 / Deep ecotype).